The primary structure comprises 177 residues: Putative adenylate kinase (177 aa).

Residues Gly-10, Gly-12, Lys-13, Thr-14, and Thr-15 each contribute to the ATP site. Residues 30 to 50 (SLRDYAIEKGIGEMKGDELEV) form an NMP region. The LID stretch occupies residues 99-109 (ERGYSREKVGE). ATP contacts are provided by Arg-100 and Lys-138.

It belongs to the adenylate kinase family. AK6 subfamily. In terms of assembly, interacts with uS11. Not a structural component of 40S pre-ribosomes, but transiently interacts with them by binding to uS11.

It carries out the reaction AMP + ATP = 2 ADP. It catalyses the reaction ATP + H2O = ADP + phosphate + H(+). Functionally, broad-specificity nucleoside monophosphate (NMP) kinase that catalyzes the reversible transfer of the terminal phosphate group between nucleoside triphosphates and monophosphates. Also has ATPase activity. Involved in the late maturation steps of the 30S ribosomal particles, specifically 16S rRNA maturation. While NMP activity is not required for ribosome maturation, ATPase activity is. Associates transiently with small ribosomal subunit protein uS11. ATP hydrolysis breaks the interaction with uS11. May temporarily remove uS11 from the ribosome to enable a conformational change of the ribosomal RNA that is needed for the final maturation step of the small ribosomal subunit. The sequence is that of Putative adenylate kinase from Thermococcus gammatolerans (strain DSM 15229 / JCM 11827 / EJ3).